The chain runs to 426 residues: Enolase (426 aa).

Residue Gln-163 coordinates (2R)-2-phosphoglycerate. Catalysis depends on Glu-205, which acts as the Proton donor. Positions 242, 286, and 313 each coordinate Mg(2+). Lys-338, Arg-367, Ser-368, and Lys-389 together coordinate (2R)-2-phosphoglycerate. The Proton acceptor role is filled by Lys-338.

It belongs to the enolase family. Mg(2+) is required as a cofactor.

Its subcellular location is the cytoplasm. The protein localises to the secreted. The protein resides in the cell surface. It catalyses the reaction (2R)-2-phosphoglycerate = phosphoenolpyruvate + H2O. Its pathway is carbohydrate degradation; glycolysis; pyruvate from D-glyceraldehyde 3-phosphate: step 4/5. Functionally, catalyzes the reversible conversion of 2-phosphoglycerate (2-PG) into phosphoenolpyruvate (PEP). It is essential for the degradation of carbohydrates via glycolysis. This Helicobacter pylori (strain G27) protein is Enolase.